Reading from the N-terminus, the 253-residue chain is MRYLKKVTIYISLLILVSGCGNGKETEIKQNFNKMLDMYPTKNLEDFYDKEGYRDEEFDKKDKGTWIVGSTMTIEPKGKYMESRGMFLYINRNTRTTKGYYYVRKTTDDSKGRLKDDEKRYPVKMEHNKIIPTKPIPNDKLKKEIENFKFFVQYGDFKNLKDYKDGDISYNPNVPSYSAKYQLSNNDYNVKQLRKRYDIPTNQAPKLLLKGDGDLKGSSIGSKSLEFTFIENKEENIFFSDGVQFTPSEDSES.

A signal peptide spans 1–19 (MRYLKKVTIYISLLILVSG). The N-palmitoyl cysteine moiety is linked to residue C20. C20 is lipidated: S-diacylglycerol cysteine.

Belongs to the staphylococcal tandem lipoprotein family.

Its subcellular location is the cell membrane. This is an uncharacterized protein from Staphylococcus epidermidis (strain ATCC 35984 / DSM 28319 / BCRC 17069 / CCUG 31568 / BM 3577 / RP62A).